The primary structure comprises 500 residues: NAD(P)H-quinone oxidoreductase chain 4, chloroplastic (500 aa).

14 consecutive transmembrane segments (helical) span residues 4-24 (FPWLTILVVLPIFAGSLIFFL), 37-57 (ISICLLEFLLMTYAFCYHFQL), 87-107 (LGSILLTGFITTLATLAAWPI), 113-130 (LFYFLMLAMYSGQIGLFS), 134-154 (LLLFFIMWELELIPVYLLLSM), 167-187 (FILYTAGGSIFFLIGVLGMGL), 211-231 (ILLYFGFLIAYAVKLPIIPLH), 242-262 (HYSTCMLLAGILLKMGAYGLI), 274-294 (YLFSPWLVIIGAIQIIYAALT), 313-333 (MGFIIIGIGSITNIGLNGAIL), 334-354 (QILSHGFIGATLFFLAGTASD), 386-406 (LALPGMSGFVAELVVFFGLIT), 417-437 (LITFVMAIGMILTPIYLLSML), and 462-482 (LFILICIFLPVIGIGIYPDFV).

It belongs to the complex I subunit 4 family.

The protein localises to the plastid. The protein resides in the chloroplast thylakoid membrane. It catalyses the reaction a plastoquinone + NADH + (n+1) H(+)(in) = a plastoquinol + NAD(+) + n H(+)(out). The catalysed reaction is a plastoquinone + NADPH + (n+1) H(+)(in) = a plastoquinol + NADP(+) + n H(+)(out). In Hordeum vulgare (Barley), this protein is NAD(P)H-quinone oxidoreductase chain 4, chloroplastic (ndhD).